The chain runs to 308 residues: Ribonuclease Z (308 aa).

The Zn(2+) site is built by His62, His64, Asp66, His67, His140, Asp211, and His269. The active-site Proton acceptor is Asp66.

Belongs to the RNase Z family. Homodimer. Zn(2+) is required as a cofactor.

The enzyme catalyses Endonucleolytic cleavage of RNA, removing extra 3' nucleotides from tRNA precursor, generating 3' termini of tRNAs. A 3'-hydroxy group is left at the tRNA terminus and a 5'-phosphoryl group is left at the trailer molecule.. Functionally, zinc phosphodiesterase, which displays some tRNA 3'-processing endonuclease activity. Probably involved in tRNA maturation, by removing a 3'-trailer from precursor tRNA. The polypeptide is Ribonuclease Z (Treponema denticola (strain ATCC 35405 / DSM 14222 / CIP 103919 / JCM 8153 / KCTC 15104)).